The following is a 182-amino-acid chain: WUSCHEL-related homeobox 5 (182 aa).

The tract at residues M1 to R24 is disordered. Positions T20–R84 form a DNA-binding region, homeobox; WUS-type.

This sequence belongs to the WUS homeobox family. As to expression, specifically expressed in the central cells of a quiescent center (QC) of the root.

Its subcellular location is the nucleus. Transcription factor, which may be involved in the specification and maintenance of the stem cells (QC cells) in the root apical meristem (RAM). The sequence is that of WUSCHEL-related homeobox 5 (WOX5) from Arabidopsis thaliana (Mouse-ear cress).